Consider the following 1329-residue polypeptide: Synergin gamma (1329 aa).

Residues 112–152 (MQKQFAEEQQKRFEQQQKLLEEERKRRQFEEQKQKLRLLSS) are a coiled coil. The disordered stretch occupies residues 175–211 (GFSRDAKMHPTPASHPKKPDCPTSSHSTKTVSPSSAF). The segment covering 197–209 (TSSHSTKTVSPSS) has biased composition (low complexity). An EH domain is found at 393–504 (NESLVPDAYK…TPVSQPTAMT (112 aa)). Residues 555-559 (DFQDF) carry the DFXDF motif 1 motif. Ser-571 is modified (phosphoserine). Residues 578-594 (VPASSKTSNSQHGNSAP) are compositionally biased toward polar residues. Residues 578 to 600 (VPASSKTSNSQHGNSAPSLLIPL) are disordered. An N6-acetyllysine modification is found at Lys-609. The segment at 614 to 878 (KGISAEKPSE…ADFHSSKFSS (265 aa)) is interaction with AP1G1. Disordered stretches follow at residues 661–701 (GTDD…TQTQ) and 730–753 (AFST…PASL). Ser-676 bears the Phosphoserine mark. An interaction with AP1G1, AP1G2 and GGA1 region spans residues 761–773 (LADDFGEFNLFGE). The short motif at 785–789 (DFADF) is the DFXDF motif 2 element. Residues 797 to 835 (IPSEPKADDKYEALREEGSPGALSTSTVEGAHNPPVSSS) form a disordered region. Over residues 801–814 (PKADDKYEALREEG) the composition is skewed to basic and acidic residues. At Ser-815 the chain carries Phosphoserine. Lys-836 carries the post-translational modification N6-acetyllysine. Phosphoserine is present on residues Ser-844 and Ser-864. 3 disordered regions span residues 856–922 (KENT…DSED), 941–1042 (HVMS…FGEF), and 1088–1113 (SLSL…RDRS). A compositionally biased stretch (basic and acidic residues) spans 864–873 (SDGDFADFHS). A DFXDF motif 3 motif is present at residues 867–871 (DFADF). The segment covering 874 to 883 (SKFSSTSSDK) has biased composition (low complexity). Phosphoserine is present on residues Ser-904, Ser-944, Ser-947, Ser-997, Ser-1021, Ser-1088, Ser-1090, Ser-1102, and Ser-1113. Residues 944–955 (SDSSLDLPTVSG) show a composition bias toward polar residues. Residues 1016–1028 (ENTCPSPASSVAS) are compositionally biased toward polar residues. Thr-1115 is subject to Phosphothreonine.

In terms of assembly, self-associates. Interacts with GGA1 (via GAE domain). Interacts with GGA2 and GGA3. Interacts with AP1G1 (via GAE domain), a subunit of adapter protein complex AP-1. Interacts with AP1G2 (via GAE domain) a subunit of adapter protein complex AP-1. Component of the aftiphilin/p200/gamma-synergin complex, at least composed of AFTPH/aftiphilin, HEATR5B/p200a and SYNRG/gamma-synergin, which plays a role in the AP1G1/AP-1-mediated trafficking of transferrin from early to recycling endosomes. Within the complex interacts with AFTPH/aftiphilin and HEATR5B/p200a; the interactions are direct. Interacts (via EH domain) with SCAMP1. In terms of tissue distribution, detected in brain and liver (at protein level). Ubiquitously expressed.

It localises to the cytoplasm. It is found in the golgi apparatus. Its subcellular location is the trans-Golgi network membrane. The protein localises to the perinuclear region. The protein resides in the cytoplasmic vesicle. It localises to the clathrin-coated vesicle. Functionally, plays a role in endocytosis and/or membrane trafficking at the trans-Golgi network (TGN). May act by linking the adapter protein complex AP-1 to other proteins. Component of clathrin-coated vesicles. Component of the aftiphilin/p200/gamma-synergin complex, which plays roles in AP1G1/AP-1-mediated protein trafficking including the trafficking of transferrin from early to recycling endosomes, and the membrane trafficking of furin and the lysosomal enzyme cathepsin D between the trans-Golgi network (TGN) and endosomes. The sequence is that of Synergin gamma (Synrg) from Rattus norvegicus (Rat).